The sequence spans 258 residues: N(G),N(G)-dimethylarginine dimethylaminohydrolase (258 aa).

Residues leucine 19, aspartate 62, 67 to 68 (ED), arginine 87, and arginine 133 contribute to the substrate site. The Proton donor role is filled by histidine 163. The Nucleophile role is filled by cysteine 248.

Belongs to the DDAH family.

It catalyses the reaction N(omega),N(omega)-dimethyl-L-arginine + H2O = dimethylamine + L-citrulline. The catalysed reaction is N(omega)-methyl-L-arginine + H2O = L-citrulline + methylamine. Its function is as follows. Hydrolyzes N(G),N(G)-dimethyl-L-arginine (ADMA) and N(G)-monomethyl-L-arginine (MMA). The sequence is that of N(G),N(G)-dimethylarginine dimethylaminohydrolase (ddaH) from Streptomyces coelicolor (strain ATCC BAA-471 / A3(2) / M145).